A 156-amino-acid polypeptide reads, in one-letter code: Ribosomal RNA large subunit methyltransferase H (156 aa).

S-adenosyl-L-methionine contacts are provided by residues L73, G104, and 123–128 (LSALTL).

This sequence belongs to the RNA methyltransferase RlmH family. Homodimer.

It is found in the cytoplasm. It catalyses the reaction pseudouridine(1915) in 23S rRNA + S-adenosyl-L-methionine = N(3)-methylpseudouridine(1915) in 23S rRNA + S-adenosyl-L-homocysteine + H(+). Its function is as follows. Specifically methylates the pseudouridine at position 1915 (m3Psi1915) in 23S rRNA. This is Ribosomal RNA large subunit methyltransferase H from Shewanella piezotolerans (strain WP3 / JCM 13877).